The chain runs to 180 residues: Cytidylate kinase (180 aa).

7–15 (GLPGSGTTT) provides a ligand contact to ATP.

It belongs to the cytidylate kinase family. Type 2 subfamily.

It localises to the cytoplasm. It carries out the reaction CMP + ATP = CDP + ADP. It catalyses the reaction dCMP + ATP = dCDP + ADP. In Methanosarcina barkeri (strain Fusaro / DSM 804), this protein is Cytidylate kinase.